We begin with the raw amino-acid sequence, 167 residues long: MGIFALFAVLWTTLLVTSHAYVALPCCAIQASAASTLPLFFAVHSIHFADPNHCNGVCIAKLRSKTGDITVETCVNGFNLRSFLVAVVRRLGSWASQENLRLLWYLQRSLTAYTVGFNATTADSSIHNVNIIIISVGKAMNRTGSVSGSQTRAKSSSRRAHAGQKGK.

The signal sequence occupies residues methionine 1 to alanine 20. The interaction with gH stretch occupies residues serine 18–isoleucine 131. Residues arginine 142–lysine 154 are compositionally biased toward polar residues. A disordered region spans residues arginine 142–lysine 167. The segment covering serine 155–lysine 167 has biased composition (basic residues).

This sequence belongs to the herpesviridae glycoprotein L family. As to quaternary structure, interacts with glycoprotein H (gH); this interaction is necessary for the correct processing and cell surface expression of gH. The heterodimer gH/gL seems to interact with gB trimers during fusion. When in complex with gH, interacts with host EPHA2; this interaction triggers EPHA2 phosphorylation and endocytosis, allowing virus entry.

The protein localises to the virion membrane. It is found in the host cell membrane. The protein resides in the host Golgi apparatus. It localises to the host trans-Golgi network. Its function is as follows. The heterodimer glycoprotein H-glycoprotein L is required for the fusion of viral and plasma membranes leading to virus entry into the host cell. Acts as a functional inhibitor of gH and maintains gH in an inhibited form. Upon binding to host integrins, gL dissociates from gH leading to activation of the viral fusion glycoproteins gB and gH. Targets heparan sulfate proteoglycans of the syndecan family as well as host EPHA2 to promote viral entry. This chain is Envelope glycoprotein L, found in Human herpesvirus 8 type P (isolate GK18) (HHV-8).